Here is a 277-residue protein sequence, read N- to C-terminus: Tumor necrosis factor receptor superfamily member 4 (277 aa).

The signal sequence occupies residues 1–28; sequence MCVGARRLGRGPCAALLLLGLGLSTVTG. The Extracellular portion of the chain corresponds to 29 to 214; sequence LHCVGDTYPS…RPVEVPGGRA (186 aa). 2 TNFR-Cys repeats span residues 30–65 and 66–107; these read HCVG…TVCR and PCGP…DTVC. 8 cysteine pairs are disulfide-bonded: cysteine 31-cysteine 42, cysteine 43-cysteine 56, cysteine 46-cysteine 64, cysteine 67-cysteine 81, cysteine 84-cysteine 99, cysteine 87-cysteine 107, cysteine 109-cysteine 125, and cysteine 128-cysteine 141. One copy of the TNFR-Cys 3; truncated repeat lies at 108–126; it reads RCRAGTQPLDSYKPGVDCA. One copy of the TNFR-Cys 4 repeat lies at 127–167; sequence PCPPGHFSPGDNQACKPWTNCTLAGKHTLQPASNSSDAICE. Asparagine 146 and asparagine 160 each carry an N-linked (GlcNAc...) asparagine glycan. A disulfide bond links cysteine 147 and cysteine 166. The segment at 158 to 209 is disordered; it reads ASNSSDAICEDRDPPATQPQETQGPPARPITVQPTEAWPRTSQGPSTRPVEV. Residues 215–235 form a helical membrane-spanning segment; sequence VAAILGLGLVLGLLGPLAILL. Residues 236–277 are Cytoplasmic-facing; it reads ALYLLRRDQRLPPDAHKPPGGGSFRTPIQEEQADAHSTLAKI. The tract at residues 248–277 is disordered; that stretch reads PDAHKPPGGGSFRTPIQEEQADAHSTLAKI.

Interacts with TRAF2, TRAF3 and TRAF5. As to quaternary structure, (Microbial infection) Interacts with Human herpesvirus 6B/HHV-6B gQ1:gQ2 proteins.

It localises to the membrane. Its function is as follows. Receptor for TNFSF4/OX40L/GP34. Is a costimulatory molecule implicated in long-term T-cell immunity. (Microbial infection) Acts as a receptor for human herpesvirus 6B/HHV-6B. The sequence is that of Tumor necrosis factor receptor superfamily member 4 (TNFRSF4) from Homo sapiens (Human).